Consider the following 518-residue polypeptide: Arrestin-related trafficking adapter 10 (518 aa).

Lys-118 participates in a covalent cross-link: Glycyl lysine isopeptide (Lys-Gly) (interchain with G-Cter in ubiquitin).

Belongs to the ART10 family. Interacts with RSP5. Ubiquitinated by RSP5.

It is found in the cytoplasm. May regulate endocytosis by recruiting RSP5 ubiquitin ligase activity to specific plasma membrane proteins in response to extracellular stimuli. This chain is Arrestin-related trafficking adapter 10 (ART10), found in Saccharomyces cerevisiae (strain ATCC 204508 / S288c) (Baker's yeast).